The sequence spans 947 residues: MKQMRLWGFLFLSSFCQVSYLRANDVLLPLSGIHSGEDLELFTLRSSSPTKTTYSLRKDFIVCDFAGNSIHKPGAAFLNLKGDLFFINSTPLAALTFKNIHLGARGAGLFSESNVTFKGLHSLVLENNESWGGVLTTSGDLSFINNTSVLCQNNISYGPGGALLLQGRKSKALFFRDNRGTILFLKNKAVNQDESHPGYGGAVSSISPGSPITFADNQEILFQENEGELGGAIYNDQGAITFENNFQTTSFFSNKASFGGAVYSRYCNLYSQWGDTLFTKNAAAKVGGAIHADYVHIRDCKGSIVFEENSATAGGAIAVNAVCDINAQGPVRFINNSALGLNGGAIYMQATGSILRLHANQGDIEFCGNKVRSQFHSHINSTSNFTNNAITIQGAPREFSLSANEGHRICFYDPIISATENYNSLYINHQRLLEAGGAVIFSGARLSPEHKKENKNKTSIINQPVRLCSGVLSIEGGAILAVRSFYQEGGLLALGPGSKLTTQGKNSEKDKIVITNLGFNLENLDSSDPAEIRATEKASIEISGVPRVYGHTESFYENHEYASKPYTTSIILSAKKLVTAPSRPEKDIQNLIIAESEYMGYGYQGSWEFSWSPNDTKEKKTIIASWTPTGEFSLDPKRRGSFIPTTLWSTFSGLNIASNIVNNNYLNNSEVIPLQHLCVFGGPVYQIMEQNPKQSSNNLLVQHAGHNVGARIPFSFNTILSAALTQLFSSSSQQNVADKSHAQILIGTVSLNKSWQALSLRSSFSYTEDSQVMKHVFPYKGTSRGSWRNYGWSGSVGMSYAYPKGIRYLKMTPFVDLQYTKLVQNPFVETGYDPRYFSSSEMTNLSLPIGIALEMRFIGSRSSLFLQVSTSYIKDLRRVNPQSSASLVLNHYTWDIQGVPLGKEALNITLNSTIKYKIVTAYMGISSTQREGSNLSANAHAGLSLSF.

The signal sequence occupies residues 1–19; that stretch reads MKQMRLWGFLFLSSFCQVS. Positions 672 to 947 constitute an Autotransporter domain; it reads IPLQHLCVFG…NAHAGLSLSF (276 aa).

It belongs to the PMP outer membrane protein family.

Its subcellular location is the secreted. The protein localises to the cell wall. It localises to the cell outer membrane. This is Probable outer membrane protein pmp19 (pmp19) from Chlamydia pneumoniae (Chlamydophila pneumoniae).